Reading from the N-terminus, the 488-residue chain is Glutamyl-tRNA(Gln) amidotransferase subunit A (488 aa).

Catalysis depends on charge relay system residues K79 and S159. S183 functions as the Acyl-ester intermediate in the catalytic mechanism.

It belongs to the amidase family. GatA subfamily. Heterotrimer of A, B and C subunits.

The catalysed reaction is L-glutamyl-tRNA(Gln) + L-glutamine + ATP + H2O = L-glutaminyl-tRNA(Gln) + L-glutamate + ADP + phosphate + H(+). Its function is as follows. Allows the formation of correctly charged Gln-tRNA(Gln) through the transamidation of misacylated Glu-tRNA(Gln) in organisms which lack glutaminyl-tRNA synthetase. The reaction takes place in the presence of glutamine and ATP through an activated gamma-phospho-Glu-tRNA(Gln). The polypeptide is Glutamyl-tRNA(Gln) amidotransferase subunit A (Wolbachia pipientis subsp. Culex pipiens (strain wPip)).